The following is a 164-amino-acid chain: Bacterial ferritin (164 aa).

The region spanning 1–147 (MKGKKSVISR…QQLGLIARMG (147 aa)) is the Ferritin-like diiron domain. Glutamate 18, glutamate 51, histidine 54, glutamate 94, glutamate 129, and histidine 132 together coordinate Fe cation.

This sequence belongs to the bacterioferritin family. Heterooligomer of 24 subunits, arranged as 12 dimers, that are packed together to form an approximately spherical molecule with a central cavity, in which large amounts of iron can be deposited.

The catalysed reaction is 4 Fe(2+) + O2 + 4 H(+) = 4 Fe(3+) + 2 H2O. It carries out the reaction Fe(2+)(in) = Fe(2+)(out). Its function is as follows. Iron-storage protein, whose ferroxidase center binds Fe(2+), oxidizes it using dioxygen to Fe(3+), and participates in the subsequent Fe(3+) oxide mineral core formation within the central cavity of the BFR protein shell. The polypeptide is Bacterial ferritin (Paramagnetospirillum magnetotacticum (Aquaspirillum magnetotacticum)).